We begin with the raw amino-acid sequence, 213 residues long: Ras-related protein Rab-25 (213 aa).

GTP is bound by residues Ser21, Gly24, Lys25, Thr26, Asn27, Ser38, His39, Thr43, and Thr44. A Mg(2+)-binding site is contributed by Thr26. Short sequence motifs (switch) lie at residues 35 to 49 and 67 to 84; these read NEFS…GVEF and DTAG…YYRG. Mg(2+) is bound by residues Thr44 and Asp67. Positions 70, 125, 126, 128, 156, and 157 each coordinate GTP. 2 S-geranylgeranyl cysteine lipidation sites follow: Cys209 and Cys210. A Cysteine methyl ester modification is found at Cys210. Residues 211–213 constitute a propeptide, removed in mature form; the sequence is ISL.

It belongs to the small GTPase superfamily. Rab family. Interacts (GTP-bound form) with RAB11FIP1, RAB11FIP2, RAB11FIP3 and RAB11FIP4. Interacts (via the hypervariable C-terminal region) with ITGB1 (via the cytoplasmic region); the interaction is GTP-dependent. Interacts with ITGAV. Associates with the integrin alpha-V/beta-1 heterodimer. Interacts with VPS33B. Requires Mg(2+) as cofactor.

It localises to the cell membrane. Its subcellular location is the cell projection. The protein resides in the pseudopodium membrane. The protein localises to the cytoplasmic vesicle. The enzyme catalyses GTP + H2O = GDP + phosphate + H(+). With respect to regulation, regulated by guanine nucleotide exchange factors (GEFs) which promote the exchange of bound GDP for free GTP. Regulated by GTPase activating proteins (GAPs) which increase the GTP hydrolysis activity. Inhibited by GDP dissociation inhibitors (GDIs) which prevent Rab-GDP dissociation. In terms of biological role, the small GTPases Rab are key regulators of intracellular membrane trafficking, from the formation of transport vesicles to their fusion with membranes. Rabs cycle between an inactive GDP-bound form and an active GTP-bound form that is able to recruit to membranes different set of downstream effectors directly responsible for vesicle formation, movement, tethering and fusion. RAB25 regulates epithelial cell differentiation, proliferation and survival, thereby playing key roles in tumorigenesis. Promotes invasive migration of cells in which it functions to localize and maintain integrin alpha-V/beta-1 at the tips of extending pseudopodia. Involved in the regulation of epithelial morphogenesis through the control of CLDN4 expression and localization at tight junctions. May selectively regulate the apical recycling pathway. Together with MYO5B regulates transcytosis. The chain is Ras-related protein Rab-25 (RAB25) from Bos taurus (Bovine).